The sequence spans 156 residues: Calglandulin (156 aa).

4 EF-hand domains span residues 8 to 43 (EQIT…VGIN), 44 to 79 (PTKR…YHEK), 82 to 117 (NQDE…AGEP), and 118 to 153 (LNEQ…ESFK). 5 residues coordinate Ca(2+): Asp-131, Asp-133, Asp-135, Thr-137, and Glu-142.

This sequence belongs to the calmodulin family. Calglandulin subfamily. As to expression, expressed by the venom gland.

It localises to the cytoplasm. Its function is as follows. May be involved in the cellular control mechanism of the secretion of toxins from the gland into the venom. In Bothrops insularis (Golden lancehead), this protein is Calglandulin.